The chain runs to 495 residues: Aspartyl/glutamyl-tRNA(Asn/Gln) amidotransferase subunit B (495 aa).

This sequence belongs to the GatB/GatE family. GatB subfamily. As to quaternary structure, heterotrimer of A, B and C subunits.

It catalyses the reaction L-glutamyl-tRNA(Gln) + L-glutamine + ATP + H2O = L-glutaminyl-tRNA(Gln) + L-glutamate + ADP + phosphate + H(+). The catalysed reaction is L-aspartyl-tRNA(Asn) + L-glutamine + ATP + H2O = L-asparaginyl-tRNA(Asn) + L-glutamate + ADP + phosphate + 2 H(+). Functionally, allows the formation of correctly charged Asn-tRNA(Asn) or Gln-tRNA(Gln) through the transamidation of misacylated Asp-tRNA(Asn) or Glu-tRNA(Gln) in organisms which lack either or both of asparaginyl-tRNA or glutaminyl-tRNA synthetases. The reaction takes place in the presence of glutamine and ATP through an activated phospho-Asp-tRNA(Asn) or phospho-Glu-tRNA(Gln). The sequence is that of Aspartyl/glutamyl-tRNA(Asn/Gln) amidotransferase subunit B from Prochlorococcus marinus (strain MIT 9313).